Consider the following 66-residue polypeptide: Large ribosomal subunit protein bL35 (66 aa).

The protein belongs to the bacterial ribosomal protein bL35 family. In terms of assembly, part of the 50S ribosomal subunit. Contacts proteins L15 and L33.

In terms of biological role, binds the 23S rRNA. This chain is Large ribosomal subunit protein bL35 (rpmI), found in Deinococcus radiodurans (strain ATCC 13939 / DSM 20539 / JCM 16871 / CCUG 27074 / LMG 4051 / NBRC 15346 / NCIMB 9279 / VKM B-1422 / R1).